The sequence spans 403 residues: Serine/threonine transporter SstT (403 aa).

8 consecutive transmembrane segments (helical) span residues 11-31 (GNLV…AFIS), 51-71 (AIAP…KEVG), 81-101 (VMYV…SFIF), 138-158 (ALAN…GIPL), 175-195 (AVSY…FGLV), 213-233 (LLGV…PILV), 285-305 (VAIP…VTVL), and 319-339 (FMTA…ASGV).

This sequence belongs to the dicarboxylate/amino acid:cation symporter (DAACS) (TC 2.A.23) family.

The protein resides in the cell inner membrane. It carries out the reaction L-serine(in) + Na(+)(in) = L-serine(out) + Na(+)(out). The enzyme catalyses L-threonine(in) + Na(+)(in) = L-threonine(out) + Na(+)(out). Involved in the import of serine and threonine into the cell, with the concomitant import of sodium (symport system). The polypeptide is Serine/threonine transporter SstT (Haemophilus ducreyi (strain 35000HP / ATCC 700724)).